Here is a 419-residue protein sequence, read N- to C-terminus: ATP-dependent RNA helicase RhlB (419 aa).

Positions 9 to 37 (QRFSDLALHRIVQQAIKEKGFEFCTPIQA) match the Q motif motif. The Helicase ATP-binding domain maps to 40 to 217 (LPITLKGQDI…FEHMNDPQYV (178 aa)). 53–60 (AQTGTGKT) is an ATP binding site. A DEAD box motif is present at residues 163 to 166 (DEAD). The 148-residue stretch at 241–388 (KMALLMTLLE…VSQYDAKALI (148 aa)) folds into the Helicase C-terminal domain.

The protein belongs to the DEAD box helicase family. RhlB subfamily. Component of the RNA degradosome, which is a multiprotein complex involved in RNA processing and mRNA degradation.

The protein localises to the cytoplasm. It carries out the reaction ATP + H2O = ADP + phosphate + H(+). Its function is as follows. DEAD-box RNA helicase involved in RNA degradation. Has RNA-dependent ATPase activity and unwinds double-stranded RNA. In Histophilus somni (strain 2336) (Haemophilus somnus), this protein is ATP-dependent RNA helicase RhlB.